Consider the following 214-residue polypeptide: ATP phosphoribosyltransferase (214 aa).

This sequence belongs to the ATP phosphoribosyltransferase family. Short subfamily. Heteromultimer composed of HisG and HisZ subunits.

The protein localises to the cytoplasm. It catalyses the reaction 1-(5-phospho-beta-D-ribosyl)-ATP + diphosphate = 5-phospho-alpha-D-ribose 1-diphosphate + ATP. The protein operates within amino-acid biosynthesis; L-histidine biosynthesis; L-histidine from 5-phospho-alpha-D-ribose 1-diphosphate: step 1/9. Functionally, catalyzes the condensation of ATP and 5-phosphoribose 1-diphosphate to form N'-(5'-phosphoribosyl)-ATP (PR-ATP). Has a crucial role in the pathway because the rate of histidine biosynthesis seems to be controlled primarily by regulation of HisG enzymatic activity. In Nostoc punctiforme (strain ATCC 29133 / PCC 73102), this protein is ATP phosphoribosyltransferase.